Reading from the N-terminus, the 140-residue chain is Photosystem I reaction center subunit XI (140 aa).

3 consecutive transmembrane segments (helical) span residues 48–68 (LEIG…LGPL), 79–99 (LLSA…YGAV), and 119–139 (SGFL…LTLF).

Belongs to the PsaL family.

Its subcellular location is the plastid. The protein resides in the chloroplast thylakoid membrane. In Cyanidioschyzon merolae (strain NIES-3377 / 10D) (Unicellular red alga), this protein is Photosystem I reaction center subunit XI.